Consider the following 406-residue polypeptide: Interactor protein for cytohesin exchange factors 1 (406 aa).

The region spanning 13-112 (HADCQGWLYK…WLNKLGFAVT (100 aa)) is the PH domain. 3 disordered regions span residues 118–173 (TKDE…FSSL), 228–285 (CRVS…EDDE), and 383–406 (PQDPEVTPQEIMNPTSSDCVENSL). A compositionally biased stretch (acidic residues) spans 123 to 134 (CYSESEQEDPET). Positions 144–160 (ASATSSPVAARRASSSS) are enriched in low complexity. Over residues 228–239 (CRVSENSSTTPE) the composition is skewed to polar residues. Residues 243-259 (LNSLSSDDTSSLNNSQD) show a composition bias toward low complexity. Over residues 272–285 (MTDRDEIKSSEDDE) the composition is skewed to basic and acidic residues. The necessary for interaction with PSCD2 and to translocate to the plasma membrane stretch occupies residues 285 to 406 (EMEKLYKSLE…TSSDCVENSL (122 aa)). Residues 392-406 (EIMNPTSSDCVENSL) show a composition bias toward polar residues.

In terms of assembly, interacts with guanine-nucleotide exchange factors PSCD1, PSCD2, PSCD3 and PSCD4. Expressed in brain, spleen, lung, testis and kidney.

The protein localises to the cytoplasm. It is found in the cell membrane. In terms of biological role, enhances the promotion of guanine-nucleotide exchange by PSCD2 on ARF6 in a concentration-dependent manner. In Rattus norvegicus (Rat), this protein is Interactor protein for cytohesin exchange factors 1 (Ipcef1).